A 94-amino-acid polypeptide reads, in one-letter code: Small ribosomal subunit protein uS17 (94 aa).

The interval 1 to 22 (MSEQTSAASTTDRGDRKTRRGY) is disordered.

Belongs to the universal ribosomal protein uS17 family. Part of the 30S ribosomal subunit.

In terms of biological role, one of the primary rRNA binding proteins, it binds specifically to the 5'-end of 16S ribosomal RNA. The chain is Small ribosomal subunit protein uS17 from Kineococcus radiotolerans (strain ATCC BAA-149 / DSM 14245 / SRS30216).